The primary structure comprises 324 residues: HPr kinase/phosphorylase (324 aa).

Residues H146 and K167 contribute to the active site. ATP is bound at residue 161-168; it reads GDSGLGKS. S168 lines the Mg(2+) pocket. D185 serves as the catalytic Proton acceptor; for phosphorylation activity. Proton donor; for dephosphorylation activity. Residues 209-218 are important for the catalytic mechanism of both phosphorylation and dephosphorylation; that stretch reads LEVRGLGLLD. Position 210 (E210) interacts with Mg(2+). Residue R250 is part of the active site. The segment at 271–276 is important for the catalytic mechanism of dephosphorylation; the sequence is QVAAGR.

The protein belongs to the HPrK/P family. In terms of assembly, homohexamer. The cofactor is Mg(2+).

It carries out the reaction [HPr protein]-L-serine + ATP = [HPr protein]-O-phospho-L-serine + ADP + H(+). The enzyme catalyses [HPr protein]-O-phospho-L-serine + phosphate + H(+) = [HPr protein]-L-serine + diphosphate. Functionally, catalyzes the ATP- as well as the pyrophosphate-dependent phosphorylation of a specific serine residue in HPr, a phosphocarrier protein of the phosphoenolpyruvate-dependent sugar phosphotransferase system (PTS). HprK/P also catalyzes the pyrophosphate-producing, inorganic phosphate-dependent dephosphorylation (phosphorolysis) of seryl-phosphorylated HPr (P-Ser-HPr). The sequence is that of HPr kinase/phosphorylase from Ralstonia pickettii (strain 12J).